The chain runs to 149 residues: Nucleoside diphosphate kinase (149 aa).

Residues Lys-9, Phe-57, Arg-85, Thr-91, Arg-102, and Asn-112 each contribute to the ATP site. His-115 functions as the Pros-phosphohistidine intermediate in the catalytic mechanism.

Belongs to the NDK family. Mg(2+) serves as cofactor.

Its subcellular location is the cytoplasm. The catalysed reaction is a 2'-deoxyribonucleoside 5'-diphosphate + ATP = a 2'-deoxyribonucleoside 5'-triphosphate + ADP. The enzyme catalyses a ribonucleoside 5'-diphosphate + ATP = a ribonucleoside 5'-triphosphate + ADP. Functionally, major role in the synthesis of nucleoside triphosphates other than ATP. The ATP gamma phosphate is transferred to the NDP beta phosphate via a ping-pong mechanism, using a phosphorylated active-site intermediate. This Methanosarcina acetivorans (strain ATCC 35395 / DSM 2834 / JCM 12185 / C2A) protein is Nucleoside diphosphate kinase.